We begin with the raw amino-acid sequence, 131 residues long: Small ribosomal subunit protein uS11 (131 aa).

The protein belongs to the universal ribosomal protein uS11 family. As to quaternary structure, part of the 30S ribosomal subunit. Interacts with proteins S7 and S18. Binds to IF-3.

Its function is as follows. Located on the platform of the 30S subunit, it bridges several disparate RNA helices of the 16S rRNA. Forms part of the Shine-Dalgarno cleft in the 70S ribosome. In Helicobacter pylori (strain ATCC 700392 / 26695) (Campylobacter pylori), this protein is Small ribosomal subunit protein uS11.